Consider the following 250-residue polypeptide: Cruxrhodopsin-3 (250 aa).

Residues Met1–Ile9 lie on the Extracellular side of the membrane. A helical transmembrane segment spans residues Trp10 to Ala27. The Cytoplasmic segment spans residues Arg28–Tyr41. Residues Ile42–Leu60 form a helical membrane-spanning segment. Topologically, residues Gly61–Tyr77 are extracellular. A helical transmembrane segment spans residues Trp78–Asp94. Residues Leu95 to Thr105 are Cytoplasmic-facing. The chain crosses the membrane as a helical span at residues Ile106–Leu125. Residues Ser126 to Arg138 lie on the Extracellular side of the membrane. The helical transmembrane segment at Leu139–Ser158 threads the bilayer. Over Ser159–Lys176 the chain is Cytoplasmic. The chain crosses the membrane as a helical span at residues Thr177–Val195. Topologically, residues Gly196–Ile207 are extracellular. Residues Glu208–Leu227 form a helical membrane-spanning segment. Lys220 is subject to N6-(retinylidene)lysine. At Leu228–Asp250 the chain is on the cytoplasmic side.

The protein belongs to the archaeal/bacterial/fungal opsin family. As to quaternary structure, homotrimer. Binds bacterioruberin in the crevice between neighboring subunits.

The protein localises to the cell membrane. Its function is as follows. Light-driven proton pump. This Haloarcula vallismortis (Halobacterium vallismortis) protein is Cruxrhodopsin-3 (cop3).